Reading from the N-terminus, the 503-residue chain is Aspartyl/glutamyl-tRNA(Asn/Gln) amidotransferase subunit B (503 aa).

The protein belongs to the GatB/GatE family. GatB subfamily. As to quaternary structure, heterotrimer of A, B and C subunits.

It carries out the reaction L-glutamyl-tRNA(Gln) + L-glutamine + ATP + H2O = L-glutaminyl-tRNA(Gln) + L-glutamate + ADP + phosphate + H(+). The catalysed reaction is L-aspartyl-tRNA(Asn) + L-glutamine + ATP + H2O = L-asparaginyl-tRNA(Asn) + L-glutamate + ADP + phosphate + 2 H(+). In terms of biological role, allows the formation of correctly charged Asn-tRNA(Asn) or Gln-tRNA(Gln) through the transamidation of misacylated Asp-tRNA(Asn) or Glu-tRNA(Gln) in organisms which lack either or both of asparaginyl-tRNA or glutaminyl-tRNA synthetases. The reaction takes place in the presence of glutamine and ATP through an activated phospho-Asp-tRNA(Asn) or phospho-Glu-tRNA(Gln). The polypeptide is Aspartyl/glutamyl-tRNA(Asn/Gln) amidotransferase subunit B (Nocardia farcinica (strain IFM 10152)).